A 165-amino-acid chain; its full sequence is RxLR effector protein PITG_09218 (165 aa).

A signal peptide spans 1 to 24 (MRFSAFLTLLLVAFVASCSTFASA). Positions 31-57 (RRLRADAAPVPVNKDNVAKLAGGFLEK) match the RxLR-dEER motif. A helical transmembrane segment spans residues 129-149 (VTLGATVAGFAIYGAYKALFD).

This sequence belongs to the RxLR effector family.

It is found in the secreted. The protein resides in the host mitochondrion membrane. It localises to the host endoplasmic reticulum membrane. Functionally, effector that enhances P.infestans colonization of Nicotiana benthamiana leaves. This is RxLR effector protein PITG_09218 from Phytophthora infestans (strain T30-4) (Potato late blight agent).